Consider the following 256-residue polypeptide: Small ribosomal subunit protein uS2 (256 aa).

It belongs to the universal ribosomal protein uS2 family.

This Geotalea uraniireducens (strain Rf4) (Geobacter uraniireducens) protein is Small ribosomal subunit protein uS2.